Reading from the N-terminus, the 240-residue chain is Rho GDP-dissociation inhibitor 1 (240 aa).

The interval 1 to 66 is disordered; that stretch reads MSLVSGARDM…DDDSKLQLGP (66 aa).

This sequence belongs to the Rho GDI family. As to quaternary structure, interacts with RAC-like GTP binding proteins ARAC5/ROP4 and ARAC3/ROP6.

Its subcellular location is the cytoplasm. Functionally, regulates the GDP/GTP exchange reaction of the Rho proteins by inhibiting the dissociation of GDP from them, and the subsequent binding of GTP to them. The chain is Rho GDP-dissociation inhibitor 1 (GDI1) from Arabidopsis thaliana (Mouse-ear cress).